We begin with the raw amino-acid sequence, 129 residues long: uncharacterized protein (129 aa).

Over residues serine 85–aspartate 108 the composition is skewed to low complexity. Positions serine 85–proline 110 are disordered.

This is an uncharacterized protein from Microplitis demolitor (Parasitoid wasp).